The chain runs to 268 residues: Nickel import ATP-binding protein NikE (268 aa).

The ABC transporter domain maps to 4–252; the sequence is LNVSDLSHHY…SSDAGRVLQN (249 aa). 45 to 52 contacts ATP; the sequence is GRSGCGKS.

The protein belongs to the ABC transporter superfamily. Nickel importer (TC 3.A.1.5.3) family. In terms of assembly, the complex is composed of two ATP-binding proteins (NikD and NikE), two transmembrane proteins (NikB and NikC) and a solute-binding protein (NikA).

It localises to the cell inner membrane. The enzyme catalyses Ni(2+)(out) + ATP + H2O = Ni(2+)(in) + ADP + phosphate + H(+). Its function is as follows. Part of the ABC transporter complex NikABCDE involved in nickel import. Responsible for energy coupling to the transport system. This is Nickel import ATP-binding protein NikE from Shigella dysenteriae serotype 1 (strain Sd197).